Here is a 343-residue protein sequence, read N- to C-terminus: Holliday junction branch migration complex subunit RuvB (343 aa).

The segment at 4–193 (TDNLTAAQPQ…FGIVSRLEFY (190 aa)) is large ATPase domain (RuvB-L). ATP is bound by residues Leu32, Arg33, Gly74, Lys77, Thr78, Thr79, 140 to 142 (EDY), Arg183, Tyr193, and Arg230. Thr78 provides a ligand contact to Mg(2+). The tract at residues 194 to 264 (ENRDLTTIVS…VADAALSMLD (71 aa)) is small ATPAse domain (RuvB-S). A head domain (RuvB-H) region spans residues 267–343 (AQGLDVMDRK…YLHFGLPVEK (77 aa)). The DNA site is built by Arg322 and Arg327.

This sequence belongs to the RuvB family. In terms of assembly, homohexamer. Forms an RuvA(8)-RuvB(12)-Holliday junction (HJ) complex. HJ DNA is sandwiched between 2 RuvA tetramers; dsDNA enters through RuvA and exits via RuvB. An RuvB hexamer assembles on each DNA strand where it exits the tetramer. Each RuvB hexamer is contacted by two RuvA subunits (via domain III) on 2 adjacent RuvB subunits; this complex drives branch migration. In the full resolvosome a probable DNA-RuvA(4)-RuvB(12)-RuvC(2) complex forms which resolves the HJ.

The protein localises to the cytoplasm. The catalysed reaction is ATP + H2O = ADP + phosphate + H(+). Its function is as follows. The RuvA-RuvB-RuvC complex processes Holliday junction (HJ) DNA during genetic recombination and DNA repair, while the RuvA-RuvB complex plays an important role in the rescue of blocked DNA replication forks via replication fork reversal (RFR). RuvA specifically binds to HJ cruciform DNA, conferring on it an open structure. The RuvB hexamer acts as an ATP-dependent pump, pulling dsDNA into and through the RuvAB complex. RuvB forms 2 homohexamers on either side of HJ DNA bound by 1 or 2 RuvA tetramers; 4 subunits per hexamer contact DNA at a time. Coordinated motions by a converter formed by DNA-disengaged RuvB subunits stimulates ATP hydrolysis and nucleotide exchange. Immobilization of the converter enables RuvB to convert the ATP-contained energy into a lever motion, pulling 2 nucleotides of DNA out of the RuvA tetramer per ATP hydrolyzed, thus driving DNA branch migration. The RuvB motors rotate together with the DNA substrate, which together with the progressing nucleotide cycle form the mechanistic basis for DNA recombination by continuous HJ branch migration. Branch migration allows RuvC to scan DNA until it finds its consensus sequence, where it cleaves and resolves cruciform DNA. In Neisseria gonorrhoeae (strain NCCP11945), this protein is Holliday junction branch migration complex subunit RuvB.